The chain runs to 373 residues: MASKPEKRVASSVFITLAPPRRDVAVAEEVRQAVCEARRGRPWEAPAPMKTPEAGLAGRPSPWTTPGRAAATVPAAPMQLFNGGCPPPPPVLDGEDVLPDLDLLPPPPPPPPVLLPSEEEAPAPMGASLIADLEQLHLSPPPPPPQAPAEGPSVQPGPLRPMEEELPPPPAEPVEKGASTDICAFCHKTVSPRELAVEAMKRQYHAQCFTCRTCRRQLAGQSFYQKDGRPLCEPCYQDTLERCGKCGEVVRDHIIRALGQAFHPSCFTCVTCARCIGDESFALGSQNEVYCLDDFYRKFAPVCSICENPIIPRDGKDAFKIECMGRNFHENCYRCEDCRILLSVEPTDQGCYPLNNHLFCKPCHVKRSAAGCC.

Residues 1 to 70 form a filamin-binding region; sequence MASKPEKRVA…SPWTTPGRAA (70 aa). Disordered stretches follow at residues 41-119 and 135-176; these read RPWE…PSEE and QLHL…PVEK. Pro residues predominate over residues 104–114; it reads LPPPPPPPPVL. LIM zinc-binding domains follow at residues 181-242, 243-300, and 301-370; these read DICA…TLER, CGKC…RKFA, and PVCS…RSAA. Residues 276–373 are FERMT2-binding; that stretch reads IGDESFALGS…HVKRSAAGCC (98 aa).

Interacts with NKX2-5. Isoform 1 and isoform 3 interact with FERMT2, FLNA, FLNB and FLNC. Isoform 2 interacts with FLNB. In terms of tissue distribution, isoform 1 and isoform 3 are expressed in heart, kidney, lung, pancreas, placenta and platelets. Isoform 2 is expressed in brain, heart, kidney, lung, pancreas, placenta, skeletal muscle and platelets.

The protein localises to the cell junction. Its subcellular location is the focal adhesion. It localises to the cytoplasm. It is found in the cytoskeleton. The protein resides in the stress fiber. In terms of biological role, serves as an anchoring site for cell-ECM adhesion proteins and filamin-containing actin filaments. Is implicated in cell shape modulation (spreading) and motility. May participate in the regulation of filamin-mediated cross-linking and stabilization of actin filaments. May also regulate the assembly of filamin-containing signaling complexes that control actin assembly. Promotes dissociation of FLNA from ITGB3 and ITGB7. Promotes activation of integrins and regulates integrin-mediated cell-cell adhesion. This Homo sapiens (Human) protein is Filamin-binding LIM protein 1 (FBLIM1).